A 156-amino-acid chain; its full sequence is MKCRLIATGERAPSWVAQGFAEYQKRLSHWMPLELVEIEPGLRGKGRDAQRATDDEGRRVLAALPKNAYVVALDVPGRPLSSEQLAQRMEHWRGQGRDLALLIGGPEGHSAEVLKSASESWSIGPLTLPHMLVRLIVAEQLYRAAAMLANHPYHRA.

S-adenosyl-L-methionine is bound by residues Leu73, Gly104, and 123–128; that span reads IGPLTL.

It belongs to the RNA methyltransferase RlmH family. As to quaternary structure, homodimer.

It localises to the cytoplasm. It carries out the reaction pseudouridine(1915) in 23S rRNA + S-adenosyl-L-methionine = N(3)-methylpseudouridine(1915) in 23S rRNA + S-adenosyl-L-homocysteine + H(+). Functionally, specifically methylates the pseudouridine at position 1915 (m3Psi1915) in 23S rRNA. The sequence is that of Ribosomal RNA large subunit methyltransferase H from Xanthomonas oryzae pv. oryzae (strain MAFF 311018).